A 411-amino-acid polypeptide reads, in one-letter code: UPF0597 protein Fnod_1278 (411 aa).

This sequence belongs to the UPF0597 family.

The chain is UPF0597 protein Fnod_1278 from Fervidobacterium nodosum (strain ATCC 35602 / DSM 5306 / Rt17-B1).